Consider the following 351-residue polypeptide: Holliday junction branch migration complex subunit RuvB (351 aa).

The interval 1–186 is large ATPase domain (RuvB-L); the sequence is MDEKIETRLI…FGIVQRLEFY (186 aa). Residues I25, R26, G67, K70, T71, T72, 133–135, R176, Y186, and R223 each bind ATP; that span reads EDF. T71 is a Mg(2+) binding site. The tract at residues 187–257 is small ATPAse domain (RuvB-S); the sequence is RIPDLIHIVK…IAKEALDLLN (71 aa). The head domain (RuvB-H) stretch occupies residues 260–351; it reads IRGLDVMDRK…ENFDLLGKVE (92 aa). DNA contacts are provided by R296, R315, and R320.

Belongs to the RuvB family. As to quaternary structure, homohexamer. Forms an RuvA(8)-RuvB(12)-Holliday junction (HJ) complex. HJ DNA is sandwiched between 2 RuvA tetramers; dsDNA enters through RuvA and exits via RuvB. An RuvB hexamer assembles on each DNA strand where it exits the tetramer. Each RuvB hexamer is contacted by two RuvA subunits (via domain III) on 2 adjacent RuvB subunits; this complex drives branch migration. In the full resolvosome a probable DNA-RuvA(4)-RuvB(12)-RuvC(2) complex forms which resolves the HJ.

Its subcellular location is the cytoplasm. The enzyme catalyses ATP + H2O = ADP + phosphate + H(+). The RuvA-RuvB-RuvC complex processes Holliday junction (HJ) DNA during genetic recombination and DNA repair, while the RuvA-RuvB complex plays an important role in the rescue of blocked DNA replication forks via replication fork reversal (RFR). RuvA specifically binds to HJ cruciform DNA, conferring on it an open structure. The RuvB hexamer acts as an ATP-dependent pump, pulling dsDNA into and through the RuvAB complex. RuvB forms 2 homohexamers on either side of HJ DNA bound by 1 or 2 RuvA tetramers; 4 subunits per hexamer contact DNA at a time. Coordinated motions by a converter formed by DNA-disengaged RuvB subunits stimulates ATP hydrolysis and nucleotide exchange. Immobilization of the converter enables RuvB to convert the ATP-contained energy into a lever motion, pulling 2 nucleotides of DNA out of the RuvA tetramer per ATP hydrolyzed, thus driving DNA branch migration. The RuvB motors rotate together with the DNA substrate, which together with the progressing nucleotide cycle form the mechanistic basis for DNA recombination by continuous HJ branch migration. Branch migration allows RuvC to scan DNA until it finds its consensus sequence, where it cleaves and resolves cruciform DNA. The protein is Holliday junction branch migration complex subunit RuvB of Coxiella burnetii (strain CbuG_Q212) (Coxiella burnetii (strain Q212)).